The sequence spans 375 residues: Putative F-box only protein 11 (375 aa).

The F-box domain occupies 1–46 (MVSVNLPWELVEEILCRVPPQSLVKFRTVCKQWNSLFDDNKFVNDH).

This is Putative F-box only protein 11 (FBX11) from Arabidopsis thaliana (Mouse-ear cress).